The chain runs to 213 residues: MAIKVHGSPMSTATMRVAACLIEKDLDFELVPVDMVSGEHKKHPYLSLNPFGQVPAFEDGDLKLFESRAITQYIAHVYADNGYQLILQDPKKMPIMSVWMEVEGQKFEPHASKLTWELGIKPIIGMTTDDDAVKESEVQLSKVLDIYETRLAESKYLGGDSFTLVDLHHIPNIYYLMSTKVKEVFDSRPRVSAWCADILARPAWVKGLEKLQK.

The GST N-terminal domain occupies M1–G82. Glutathione contacts are provided by residues S11, T12 to A13, H40 to K41, Q53 to V54, and E66 to S67. The region spanning D89 to K213 is the GST C-terminal domain.

Belongs to the GST superfamily. Phi family.

The catalysed reaction is RX + glutathione = an S-substituted glutathione + a halide anion + H(+). Conjugation of reduced glutathione to a wide number of exogenous and endogenous hydrophobic electrophiles. This chain is Glutathione S-transferase APIC, found in Nicotiana tabacum (Common tobacco).